The following is a 184-amino-acid chain: tRNA (cytidine(56)-2'-O)-methyltransferase (184 aa).

S-adenosyl-L-methionine contacts are provided by residues leucine 87, 112-116 (GAEKV), and 130-137 (VANQPHSE).

It belongs to the aTrm56 family. As to quaternary structure, homodimer.

Its subcellular location is the cytoplasm. The enzyme catalyses cytidine(56) in tRNA + S-adenosyl-L-methionine = 2'-O-methylcytidine(56) in tRNA + S-adenosyl-L-homocysteine + H(+). In terms of biological role, specifically catalyzes the AdoMet-dependent 2'-O-ribose methylation of cytidine at position 56 in tRNAs. The chain is tRNA (cytidine(56)-2'-O)-methyltransferase from Methanocorpusculum labreanum (strain ATCC 43576 / DSM 4855 / Z).